The following is a 375-amino-acid chain: Dual-specificity RNA methyltransferase RlmN (375 aa).

The Proton acceptor role is filled by glutamate 94. The region spanning 100–339 (EEDRATLCVS…VTVRKTRGDD (240 aa)) is the Radical SAM core domain. Cysteine 107 and cysteine 344 are oxidised to a cystine. [4Fe-4S] cluster is bound by residues cysteine 114, cysteine 118, and cysteine 121. Residues 168–169 (GE), serine 200, 222–224 (SLH), and asparagine 301 contribute to the S-adenosyl-L-methionine site. Cysteine 344 serves as the catalytic S-methylcysteine intermediate.

Belongs to the radical SAM superfamily. RlmN family. [4Fe-4S] cluster serves as cofactor.

The protein resides in the cytoplasm. It catalyses the reaction adenosine(2503) in 23S rRNA + 2 reduced [2Fe-2S]-[ferredoxin] + 2 S-adenosyl-L-methionine = 2-methyladenosine(2503) in 23S rRNA + 5'-deoxyadenosine + L-methionine + 2 oxidized [2Fe-2S]-[ferredoxin] + S-adenosyl-L-homocysteine. The enzyme catalyses adenosine(37) in tRNA + 2 reduced [2Fe-2S]-[ferredoxin] + 2 S-adenosyl-L-methionine = 2-methyladenosine(37) in tRNA + 5'-deoxyadenosine + L-methionine + 2 oxidized [2Fe-2S]-[ferredoxin] + S-adenosyl-L-homocysteine. Functionally, specifically methylates position 2 of adenine 2503 in 23S rRNA and position 2 of adenine 37 in tRNAs. m2A2503 modification seems to play a crucial role in the proofreading step occurring at the peptidyl transferase center and thus would serve to optimize ribosomal fidelity. The protein is Dual-specificity RNA methyltransferase RlmN of Vibrio parahaemolyticus serotype O3:K6 (strain RIMD 2210633).